The chain runs to 315 residues: Olfactory receptor 2T5 (315 aa).

Over Met-1–Ala-29 the chain is Extracellular. N-linked (GlcNAc...) asparagine glycosylation is found at Asn-3 and Asn-9. Residues Leu-30–Ile-53 form a helical membrane-spanning segment. Over His-54–Ser-61 the chain is Cytoplasmic. The chain crosses the membrane as a helical span at residues Pro-62–Pro-83. Over Lys-84 to Gln-104 the chain is Extracellular. An intrachain disulfide couples Cys-101 to Cys-193. The chain crosses the membrane as a helical span at residues Met-105–Tyr-124. Residues Asp-125 to Arg-143 lie on the Cytoplasmic side of the membrane. A helical transmembrane segment spans residues Val-144–Met-162. At Leu-163 to Tyr-199 the chain is on the extracellular side. A helical membrane pass occupies residues Glu-200–Leu-223. The Cytoplasmic segment spans residues Leu-224–Lys-240. The helical transmembrane segment at Ala-241–Tyr-263 threads the bilayer. Residues Met-264–Met-276 are Extracellular-facing. Residues Met-277 to Leu-296 form a helical membrane-spanning segment. The Cytoplasmic segment spans residues Arg-297–Leu-315.

It belongs to the G-protein coupled receptor 1 family.

Its subcellular location is the cell membrane. Odorant receptor. This chain is Olfactory receptor 2T5 (OR2T5), found in Homo sapiens (Human).